A 469-amino-acid polypeptide reads, in one-letter code: MEFVSMLCLFTFISLTLLLIHSIFKFLAFASKKLPLPPGTLGLPYIGETFQLYSQNPNVFFASKVKKYGSIFKTYILGCPCVMISSPEAAKQVLVTKANLFKPTFPASKERMLGKQAIFFHQGDYHAKLRKLVLQAFKPDSIRNIIPDIESIAITSLESFQGRLINTYQEMKTYTFNVALISIFGKDEFLYREELKKCYYILEKGYNSMPINLPGTLFNKAMKARKELAKIVAKIISTRREMKIDHGDLLGSFMGDKEGLTDEQIADNVIGVIFAARDTTASVLTWILKYLGENPSVLQAVTEEQENIMRKKEVNGEEKVLNWQDTRQMPMTTRVIQETLRVASILSFTFREAVEDVEFEGYLIPKGWKVLPLFRNIHHSPDNFPEPEKFDPSRFEVSPKPNTFMPFGNGVHSCPGNDLAKLEILILVHHLTTKYRWSMVGPQNGIQYGPFALPQNGLPIKLSLKTSST.

A helical transmembrane segment spans residues F3–I23. C414 is a binding site for heme.

This sequence belongs to the cytochrome P450 family. It depends on heme as a cofactor. Expressed at low levels in fruit.

The protein localises to the membrane. It catalyses the reaction 2-cis-(+)-abscisate + reduced [NADPH--hemoprotein reductase] + O2 = (+)-8'-hydroxyabscisate + oxidized [NADPH--hemoprotein reductase] + H2O + H(+). It functions in the pathway plant hormone degradation; abscisic acid degradation. In terms of biological role, negative regulator of fruit ripening involved in the oxidative degradation of abscisic acid (ABA). This Solanum lycopersicum (Tomato) protein is Abscisic acid 8'-hydroxylase CYP707A2.